The sequence spans 175 residues: Disulfide bond formation protein B (175 aa).

Residues 1-13 (MVSNWLDAAPRRV) are Cytoplasmic-facing. A helical transmembrane segment spans residues 14–30 (LALISAACIAMLAFGMY). At 31–48 (LQHVVGLEPCPMCIVQRY) the chain is on the periplasmic side. Residues cysteine 40 and cysteine 43 are joined by a disulfide bond. The helical transmembrane segment at 49–65 (ALIGVAVFTGLGSLRGG) threads the bilayer. Residues 66–70 (RGWWM) are Cytoplasmic-facing. Residues 71–88 (TWGVLALLLSGFGAFVAA) traverse the membrane as a helical segment. At 89-144 (RQSWLQWYPPEIATCGRDFYGMIENFPISRAIPMIFRGSGDCAAIDWTFLGGSIAN) the chain is on the periplasmic side. The cysteines at positions 103 and 130 are disulfide-linked. The helical transmembrane segment at 145 to 163 (WSFVCFVVMALVLLVMLLR) threads the bilayer. Residues 164-175 (APRPARGGFSAA) are Cytoplasmic-facing.

The protein belongs to the DsbB family.

It is found in the cell inner membrane. Its function is as follows. Required for disulfide bond formation in some periplasmic proteins. Acts by oxidizing the DsbA protein. This Paracidovorax citrulli (strain AAC00-1) (Acidovorax citrulli) protein is Disulfide bond formation protein B.